The sequence spans 156 residues: ATP synthase subunit b (156 aa).

The chain crosses the membrane as a helical span at residues 1–21 (MNVTVTLIGQMVAFGILVWFV).

This sequence belongs to the ATPase B chain family. F-type ATPases have 2 components, F(1) - the catalytic core - and F(0) - the membrane proton channel. F(1) has five subunits: alpha(3), beta(3), gamma(1), delta(1), epsilon(1). F(0) has three main subunits: a(1), b(2) and c(10-14). The alpha and beta chains form an alternating ring which encloses part of the gamma chain. F(1) is attached to F(0) by a central stalk formed by the gamma and epsilon chains, while a peripheral stalk is formed by the delta and b chains.

It localises to the cell inner membrane. F(1)F(0) ATP synthase produces ATP from ADP in the presence of a proton or sodium gradient. F-type ATPases consist of two structural domains, F(1) containing the extramembraneous catalytic core and F(0) containing the membrane proton channel, linked together by a central stalk and a peripheral stalk. During catalysis, ATP synthesis in the catalytic domain of F(1) is coupled via a rotary mechanism of the central stalk subunits to proton translocation. Functionally, component of the F(0) channel, it forms part of the peripheral stalk, linking F(1) to F(0). The chain is ATP synthase subunit b from Nitrosococcus oceani (strain ATCC 19707 / BCRC 17464 / JCM 30415 / NCIMB 11848 / C-107).